The following is a 132-amino-acid chain: Agouti-signaling protein (132 aa).

Residues 1 to 22 (MDVTRLLLATLLVFLCFFTAYS) form the signal peptide. Asn-39 carries an N-linked (GlcNAc...) asparagine glycan. The interval 57-88 (KKSKQTSRKEAEKKRSSKKEASMKKVARPRTP) is disordered. The span at 63 to 79 (SRKEAEKKRSSKKEASM) shows a compositional bias: basic and acidic residues. 5 disulfides stabilise this stretch: Cys-93–Cys-108, Cys-100–Cys-114, Cys-107–Cys-125, Cys-111–Cys-132, and Cys-116–Cys-123. The Agouti domain maps to 93–132 (CVATRDSCKPPAPACCDPCASCQCRFFRSACSCRVLSLNC).

It localises to the secreted. Its function is as follows. Involved in the regulation of melanogenesis. The binding of ASP to MC1R precludes alpha-MSH initiated signaling and thus blocks production of cAMP, leading to a down-regulation of eumelanogenesis (brown/black pigment) and thus increasing synthesis of pheomelanin (yellow/red pigment). The sequence is that of Agouti-signaling protein (ASIP) from Macaca assamensis (Assam macaque).